A 378-amino-acid chain; its full sequence is MDIVCEFCDKSFDSKSKVNAHQRTKKCQQFRTITFVCRKCSSAILGYDNILFHVENCNGTTPILHKEIEDKIKVKNHNKEHDNKIFFGKGLNGKTVYIFNYEKSMLTYGSTNIISESIVSTIDNLVEKATLKSLNDAIQSFSKESFLQEILFKYPQPFSISDISKFFEYESRTVMAFLMAKDLNDLFEILFKECKLFPVCIVNDDIYVIDKVVRQNLDKWILEWKQIDYKEVSLSLKGFFLPVLNYAIKLFLNESNNNTTLKLLELIKEIADETKIRKLMSTFTKPIPVFEDIQNIFQNVKYIYNGSYKHTPMDTFIKNISYGSCFVKEKSIKTEHELYSLLMSLTKESEKTALIKKIKMNDNDDIVEIEKEMKLLKV.

Residues 3–25 form a C2H2-type; degenerate zinc finger; that stretch reads IVCEFCDKSFDSKSKVNAHQRTK.

It belongs to the IIV-6 302L family.

In Invertebrate iridescent virus 6 (IIV-6), this protein is Putative zinc finger protein 302L.